We begin with the raw amino-acid sequence, 414 residues long: Esterase FrsA (414 aa).

It belongs to the FrsA family.

The catalysed reaction is a carboxylic ester + H2O = an alcohol + a carboxylate + H(+). In terms of biological role, catalyzes the hydrolysis of esters. In Shigella dysenteriae serotype 1 (strain Sd197), this protein is Esterase FrsA.